Reading from the N-terminus, the 284-residue chain is MSQTPEARARDNQTRQIQESVNNVEKHFGELCQIFAGYVRKTARLRDKADLLVREVNTYADTETPTVKLGLKNFADELAKLQDYRQAEVERLESRVVEPLKSYGSIIKLKREDLKVTLTARNREAKQMAQLEKTRQRNPSDRQIISQAETELQRATMDASRISQQLEETIDNFEKQKMKDIKKLFTEFVSIEMVFHGKALEVLTAAYQHIQDIDEEEDLEVFRNSLHPPDFQSRLDIVRANSRTGSTSRGPSVISQPPGNRQKNRIEDEDEEEEDDENSTEDEN.

The N-terminal 48 residues, 1-48, are a transit peptide targeting the mitochondrion; sequence MSQTPEARARDNQTRQIQESVNNVEKHFGELCQIFAGYVRKTARLRDK. Residues 11–221 form a BAR-like region; sequence DNQTRQIQES…DIDEEEDLEV (211 aa). Coiled coils occupy residues 142–184 and 260–284; these read RQII…IKKL and NRQK…EDEN. Residues 242–261 are compositionally biased toward polar residues; the sequence is SRTGSTSRGPSVISQPPGNR. The segment at 242 to 284 is disordered; sequence SRTGSTSRGPSVISQPPGNRQKNRIEDEDEEEEDDENSTEDEN. Over residues 267 to 284 the composition is skewed to acidic residues; that stretch reads EDEDEEEEDDENSTEDEN.

This sequence belongs to the CIBAR family.

The protein resides in the cytoplasm. The protein localises to the cytoskeleton. It localises to the microtubule organizing center. Its subcellular location is the centrosome. It is found in the centriole. The protein resides in the nucleus. The protein localises to the mitochondrion inner membrane. It localises to the cell projection. Its subcellular location is the cilium. It is found in the flagellum. Functionally, plays a critical role in regulating mitochondrial ultrastructure and function by maintaining the integrity of mitochondrial morphology, particularly the organization of cristae. Plays a crucial role in ciliogenesis. Plays a key role in the correct positioning of the annulus, a septin-based ring structure in the sperm flagellum, serving both as a physical barrier and a membrane diffusion barrier that separates the midpiece (MP) from the principal piece (PP). The sequence is that of CBY1-interacting BAR domain-containing protein 1-A from Xenopus laevis (African clawed frog).